Consider the following 386-residue polypeptide: Acetate kinase (386 aa).

Asn-9 lines the Mg(2+) pocket. Lys-16 contacts ATP. Arg-74 lines the substrate pocket. Catalysis depends on Asp-131, which acts as the Proton donor/acceptor. ATP-binding positions include 191–195, 265–267, and 313–317; these read HLGNG, DFR, and GVGEN. A Mg(2+)-binding site is contributed by Glu-367.

Belongs to the acetokinase family. As to quaternary structure, homodimer. Mg(2+) serves as cofactor. It depends on Mn(2+) as a cofactor.

The protein localises to the cytoplasm. It carries out the reaction acetate + ATP = acetyl phosphate + ADP. The protein operates within metabolic intermediate biosynthesis; acetyl-CoA biosynthesis; acetyl-CoA from acetate: step 1/2. Catalyzes the formation of acetyl phosphate from acetate and ATP. Can also catalyze the reverse reaction. This is Acetate kinase from Mycolicibacterium gilvum (strain PYR-GCK) (Mycobacterium gilvum (strain PYR-GCK)).